Reading from the N-terminus, the 468-residue chain is ATP synthase subunit beta (468 aa).

155–162 (GGAGVGKT) lines the ATP pocket.

It belongs to the ATPase alpha/beta chains family. F-type ATPases have 2 components, CF(1) - the catalytic core - and CF(0) - the membrane proton channel. CF(1) has five subunits: alpha(3), beta(3), gamma(1), delta(1), epsilon(1). CF(0) has three main subunits: a(1), b(2) and c(9-12). The alpha and beta chains form an alternating ring which encloses part of the gamma chain. CF(1) is attached to CF(0) by a central stalk formed by the gamma and epsilon chains, while a peripheral stalk is formed by the delta and b chains.

The protein resides in the cell membrane. The enzyme catalyses ATP + H2O + 4 H(+)(in) = ADP + phosphate + 5 H(+)(out). In terms of biological role, produces ATP from ADP in the presence of a proton gradient across the membrane. The catalytic sites are hosted primarily by the beta subunits. In Streptococcus suis (strain 98HAH33), this protein is ATP synthase subunit beta.